A 228-amino-acid polypeptide reads, in one-letter code: Probable septum site-determining protein MinC (228 aa).

The protein belongs to the MinC family. In terms of assembly, interacts with MinD and FtsZ.

Cell division inhibitor that blocks the formation of polar Z ring septums. Rapidly oscillates between the poles of the cell to destabilize FtsZ filaments that have formed before they mature into polar Z rings. Prevents FtsZ polymerization. This Yersinia enterocolitica serotype O:8 / biotype 1B (strain NCTC 13174 / 8081) protein is Probable septum site-determining protein MinC.